The primary structure comprises 356 residues: tRNA-specific 2-thiouridylase MnmA (356 aa).

Residue 6-13 participates in ATP binding; that stretch reads AVSGGTDS. The active-site Nucleophile is the Cys-95. Cys-95 and Cys-195 form a disulfide bridge. Residue Gly-119 participates in ATP binding. Positions 145-147 are interaction with tRNA; that stretch reads KDQ. Cys-195 acts as the Cysteine persulfide intermediate in catalysis. The interval 300 to 301 is interaction with tRNA; the sequence is RY.

Belongs to the MnmA/TRMU family.

The protein resides in the cytoplasm. It carries out the reaction S-sulfanyl-L-cysteinyl-[protein] + uridine(34) in tRNA + AH2 + ATP = 2-thiouridine(34) in tRNA + L-cysteinyl-[protein] + A + AMP + diphosphate + H(+). Catalyzes the 2-thiolation of uridine at the wobble position (U34) of tRNA, leading to the formation of s(2)U34. This Oleidesulfovibrio alaskensis (strain ATCC BAA-1058 / DSM 17464 / G20) (Desulfovibrio alaskensis) protein is tRNA-specific 2-thiouridylase MnmA.